Consider the following 2663-residue polypeptide: Ankyrin repeat domain-containing protein 11 (2663 aa).

Disordered regions lie at residues 1–90 (MPKG…KEPV) and 128–169 (SANS…ERGE). Basic and acidic residues-rich tracts occupy residues 21–54 (MVEK…VRER) and 69–90 (EQKD…KEPV). Positions 128-155 (SANSPVDTTPKHPSQSTVCQKGTPNSAS) are enriched in polar residues. Positions 156–169 (KTKDKVNKRNERGE) are enriched in basic and acidic residues. ANK repeat units lie at residues 167–196 (RGET…DVNV), 200–229 (AGWT…EVNT), 233–262 (DDDT…NPQQ), and 266–292 (KGET…YTSS). Position 276 is a phosphoserine (S276). Disordered stretches follow at residues 289–380 (YTSS…SNSF), 398–647 (APKK…GQCS), and 723–783 (DTNK…NDLK). The segment covering 295 to 305 (SSTESSEEEDA) has biased composition (acidic residues). A compositionally biased stretch (polar residues) spans 309-320 (APSSSVDGNNTD). Basic and acidic residues predominate over residues 356 to 376 (DRVPPVDDKHLLKKDYRKETK). S408 bears the Phosphoserine mark. T410 bears the Phosphothreonine mark. S411 carries the post-translational modification Phosphoserine. A compositionally biased stretch (basic and acidic residues) spans 438-451 (KTREPSNAKQQKEK). The segment covering 452 to 462 (NKVKKKRKKET) has biased composition (basic residues). Basic and acidic residues predominate over residues 463–477 (KGREVRFGKRSDKFC). Acidic residues predominate over residues 481 to 493 (SESESSESGEDDR). Low complexity predominate over residues 513–531 (SLFSSLSASSTSSHGSSAA). Residues 539-550 (TDQHTKHWRTDN) are compositionally biased toward basic and acidic residues. The segment covering 551 to 562 (WKTISSPAWSEV) has biased composition (polar residues). A compositionally biased stretch (low complexity) spans 576-588 (ESDYSSEGSSVES). Composition is skewed to basic residues over residues 591–602 (PVRKRQEHRKRA) and 629–641 (VKKH…HKNK). S834 is subject to Phosphoserine. 4 stretches are compositionally biased toward basic and acidic residues: residues 881–928 (VKED…EKHK), 935–1043 (SEKD…KSIL), 1059–1090 (KKDT…KEKA), and 1099–1112 (FSEK…KEKS). Disordered regions lie at residues 881–1043 (VKED…KSIL) and 1059–1393 (KKDT…GQYE). S1079 is modified (phosphoserine). T1120 is modified (phosphothreonine). S1123 is subject to Phosphoserine. Basic and acidic residues-rich tracts occupy residues 1142–1301 (DLPR…DKIS), 1330–1347 (GDDK…LKEK), and 1359–1393 (KSHD…GQYE). The residue at position 1419 (T1419) is a Phosphothreonine. Composition is skewed to basic and acidic residues over residues 1424 to 1446 (STEK…KELK), 1466 to 1545 (REKW…KGDP), 1556 to 1574 (APSK…KLLG), 1587 to 1597 (LSQKDLEIEER), and 1605 to 1639 (MKQM…DIPA). Residues 1424 to 1710 (STEKKDKNDS…TGVPTPTSVL (287 aa)) are disordered. Phosphoserine is present on S1509. S1692 is subject to Phosphoserine. Positions 1698 to 1710 (SRPTGVPTPTSVL) are enriched in polar residues. Position 1792 is a phosphoserine (S1792). The interval 1814–1836 (SVPAASSYDSPMPPSMEDRAPLP) is disordered. S1847 is subject to Phosphoserine. Residues Y1850 and Y1851 each carry the phosphotyrosine modification. Phosphoserine is present on residues S1852, S1859, and S1990. Disordered stretches follow at residues 1988–2019 (PESP…PAPP) and 2131–2406 (LDLG…STQQ). Composition is skewed to low complexity over residues 2310 to 2324 (IQPE…AEAP) and 2391 to 2406 (RSTQ…STQQ). Positions 2369–2663 (AKARGSEDDD…VNDDFVLLPA (295 aa)) are important for protein degradation.

In terms of assembly, interacts with the PAS region of the p160 coactivators. In terms of processing, subject to proteasomal degradation which is probably essential to regulate its activity.

It is found in the nucleus. Functionally, chromatin regulator which modulates histone acetylation and gene expression in neural precursor cells. May recruit histone deacetylases (HDACs) to the p160 coactivators/nuclear receptor complex to inhibit ligand-dependent transactivation. Has a role in proliferation and development of cortical neural precursors. May also regulate bone homeostasis. This chain is Ankyrin repeat domain-containing protein 11 (ANKRD11), found in Homo sapiens (Human).